The primary structure comprises 1040 residues: Multidrug resistance protein MdtB (1040 aa).

12 consecutive transmembrane segments (helical) span residues Phe-16–Ile-36, Leu-347–Ala-367, Ile-369–Leu-389, Leu-396–Ile-416, Ile-440–Phe-460, Phe-472–Pro-492, Trp-537–Ile-557, Leu-863–Ile-883, Phe-888–Ala-908, Ile-911–Val-931, Ile-968–Val-988, and Ile-998–Ile-1018.

Belongs to the resistance-nodulation-cell division (RND) (TC 2.A.6) family. MdtB subfamily. In terms of assembly, part of a tripartite efflux system composed of MdtA, MdtB and MdtC. MdtB forms a heteromultimer with MdtC.

The protein localises to the cell inner membrane. Functionally, the MdtABC tripartite complex confers resistance against novobiocin and deoxycholate. This Escherichia coli O81 (strain ED1a) protein is Multidrug resistance protein MdtB.